We begin with the raw amino-acid sequence, 943 residues long: Translation initiation factor IF-2 (943 aa).

Low complexity predominate over residues 99-113 (VKAAQTQAAPVQPEQ). Positions 99-354 (VKAAQTQAAP…LEPNQHAFQA (256 aa)) are disordered. The span at 117 to 141 (DAVKARAEAAARAEARAKAEAEAAK) shows a compositional bias: basic and acidic residues. The span at 145 to 172 (AKAGNKAKPAAQKPTEAKAETAPVAAET) shows a compositional bias: low complexity. Positions 173-197 (KPAEPKEKAVKPKHERNGKGKDAKK) are enriched in basic and acidic residues. Residues 200–215 (KPAAPAVPQPVVSAEE) are compositionally biased toward low complexity. A compositionally biased stretch (basic and acidic residues) spans 216–250 (QAQRDEEARRAAALRAHQEALLKEKQERQARREAM). Residues 251-264 (KQQAEQQAKAAQEA) show a composition bias toward low complexity. 2 stretches are compositionally biased toward basic and acidic residues: residues 295 to 308 (AKKE…DEGQ) and 319 to 335 (GGRD…ERVR). In terms of domain architecture, tr-type G spans 443 to 612 (PRPPVVTVMG…LLEAEVLELT (170 aa)). The interval 452–459 (GHVDHGKT) is G1. Residue 452–459 (GHVDHGKT) participates in GTP binding. The tract at residues 477 to 481 (GITQH) is G2. A G3 region spans residues 498 to 501 (DTPG). Residues 498-502 (DTPGH) and 552-555 (NKID) each bind GTP. The G4 stretch occupies residues 552-555 (NKID). A G5 region spans residues 588 to 590 (SAK).

Belongs to the TRAFAC class translation factor GTPase superfamily. Classic translation factor GTPase family. IF-2 subfamily.

It localises to the cytoplasm. One of the essential components for the initiation of protein synthesis. Protects formylmethionyl-tRNA from spontaneous hydrolysis and promotes its binding to the 30S ribosomal subunits. Also involved in the hydrolysis of GTP during the formation of the 70S ribosomal complex. The polypeptide is Translation initiation factor IF-2 (Neisseria gonorrhoeae (strain ATCC 700825 / FA 1090)).